The primary structure comprises 76 residues: Conotoxin Cal5a L2 (76 aa).

A signal peptide spans 1-22; it reads MRFYIGLMAALMLTSILRTDSA. The propeptide occupies 23-42; sequence SVGQTGTKSELALIERVIRQ. The residue at position 50 (P50) is a 4-hydroxyproline. 4-hydroxyproline; partial occurs at positions 58, 62, and 64.

Belongs to the conotoxin T superfamily. In terms of processing, contains 2 disulfide bonds that can be either 'C1-C3, C2-C4' or 'C1-C4, C2-C3', since these disulfide connectivities have been observed for conotoxins with cysteine framework V (for examples, see AC P0DQQ7 and AC P81755). As to expression, expressed by the venom duct.

It is found in the secreted. Its function is as follows. Probable neurotoxin with unknown target. Possibly targets ion channels. The protein is Conotoxin Cal5a L2 of Californiconus californicus (California cone).